Reading from the N-terminus, the 642-residue chain is Threonine--tRNA ligase (642 aa).

The TGS domain occupies M1–T61. The catalytic stretch occupies residues D243 to P534. Zn(2+) is bound by residues C334, H385, and H511.

Belongs to the class-II aminoacyl-tRNA synthetase family. In terms of assembly, homodimer. The cofactor is Zn(2+).

It is found in the cytoplasm. It carries out the reaction tRNA(Thr) + L-threonine + ATP = L-threonyl-tRNA(Thr) + AMP + diphosphate + H(+). Its function is as follows. Catalyzes the attachment of threonine to tRNA(Thr) in a two-step reaction: L-threonine is first activated by ATP to form Thr-AMP and then transferred to the acceptor end of tRNA(Thr). Also edits incorrectly charged L-seryl-tRNA(Thr). The polypeptide is Threonine--tRNA ligase (Shewanella loihica (strain ATCC BAA-1088 / PV-4)).